The chain runs to 1108 residues: Retinal guanylyl cyclase 1 (1108 aa).

The first 54 residues, 1–54 (MSAWLLPAGGFPGAGFCIPAWQSRSSLSRVLRWPGPGLPGLLLLLLLPSPSAFS), serve as a signal peptide directing secretion. Topologically, residues 55–465 (AVFKVGVLGP…PDVICNGGVE (411 aa)) are extracellular. A disulfide bond links cysteine 108 and cysteine 136. N-linked (GlcNAc...) asparagine glycosylation occurs at asparagine 300. Residues 466–490 (PGLVFVGFLLVIVVGLTGAFLAHYL) form a helical membrane-spanning segment. At 491–1108 (RHRLLHMQMV…KARPGQFTGK (618 aa)) the chain is on the cytoplasmic side. Residues 520-552 (GGSSRKVAQGSRSSLATRSTSDIRSVPSQPQES) form a disordered region. In terms of domain architecture, Protein kinase spans 520–811 (GGSSRKVAQG…DLTFDLFKGI (292 aa)). The segment covering 529–552 (GSRSSLATRSTSDIRSVPSQPQES) has biased composition (polar residues). Residues 883-1013 (TLYFSDIVGF…DTVNTASRME (131 aa)) enclose the Guanylate cyclase domain. The interval 1069–1108 (IPKPPDLQPGASNHGISLQEIPPERRKKLEKARPGQFTGK) is disordered.

This sequence belongs to the adenylyl cyclase class-4/guanylyl cyclase family. In terms of assembly, homodimer; requires homodimerization for guanylyl cyclase activity. Interacts (via C-terminus) with RD3 (via C-terminus); promotes the exit of GUCY2E from the endoplasmic reticulum and its trafficking to the photoreceptor outer segments. Interaction with RD3 negatively regulates GUCY2E guanylate cyclase activity. In terms of processing, there are 9 conserved cysteine residues in sensory guanylate cyclases, 6 in the extracellular domain, which may be involved in intra- or interchain disulfide bonds. As to expression, expressed in retina and enriched in photoreceptor outer segments.

It is found in the membrane. The protein resides in the photoreceptor outer segment membrane. The protein localises to the endoplasmic reticulum membrane. The catalysed reaction is GTP = 3',5'-cyclic GMP + diphosphate. Activated by GUCA1A when free calcium ions concentration is low, and inhibited by GUCA1A when free calcium ions concentration is high. Negatively regulated by RD3; inhibits the basal and GUCA1A-stimulated guanylate cyclase activity. Functionally, catalyzes the synthesis of cyclic GMP (cGMP) in rods and cones of photoreceptors. Plays an essential role in phototransduction, by mediating cGMP replenishment. May also participate in the trafficking of membrane-asociated proteins to the photoreceptor outer segment membrane. This chain is Retinal guanylyl cyclase 1 (Gucy2e), found in Rattus norvegicus (Rat).